A 101-amino-acid chain; its full sequence is YcgL domain-containing protein ACIAD2309 (101 aa).

Residues 1–93 (MHCDIYRSSK…PPEGFINPSD (93 aa)) enclose the YcgL domain.

The protein is YcgL domain-containing protein ACIAD2309 of Acinetobacter baylyi (strain ATCC 33305 / BD413 / ADP1).